The chain runs to 202 residues: Small ribosomal subunit protein uS5 (202 aa).

An S5 DRBM domain is found at 50 to 113; the sequence is LKQELLNVNI…REAKLNLIPV (64 aa).

This sequence belongs to the universal ribosomal protein uS5 family. In terms of assembly, part of the 30S ribosomal subunit. Contacts protein S4.

With S4 and S12 plays an important role in translational accuracy. This Pyrobaculum arsenaticum (strain DSM 13514 / JCM 11321 / PZ6) protein is Small ribosomal subunit protein uS5.